Here is a 244-residue protein sequence, read N- to C-terminus: tRNA pseudouridine synthase A (244 aa).

The active-site Nucleophile is Asp-52. Tyr-110 is a substrate binding site.

It belongs to the tRNA pseudouridine synthase TruA family. As to quaternary structure, homodimer.

The catalysed reaction is uridine(38/39/40) in tRNA = pseudouridine(38/39/40) in tRNA. Its function is as follows. Formation of pseudouridine at positions 38, 39 and 40 in the anticodon stem and loop of transfer RNAs. The protein is tRNA pseudouridine synthase A of Acetivibrio thermocellus (strain ATCC 27405 / DSM 1237 / JCM 9322 / NBRC 103400 / NCIMB 10682 / NRRL B-4536 / VPI 7372) (Clostridium thermocellum).